The following is a 321-amino-acid chain: Tetraacyldisaccharide 4'-kinase (321 aa).

54–61 contacts ATP; it reads SVGGTGKT.

It belongs to the LpxK family.

The catalysed reaction is a lipid A disaccharide + ATP = a lipid IVA + ADP + H(+). It functions in the pathway glycolipid biosynthesis; lipid IV(A) biosynthesis; lipid IV(A) from (3R)-3-hydroxytetradecanoyl-[acyl-carrier-protein] and UDP-N-acetyl-alpha-D-glucosamine: step 6/6. Functionally, transfers the gamma-phosphate of ATP to the 4'-position of a tetraacyldisaccharide 1-phosphate intermediate (termed DS-1-P) to form tetraacyldisaccharide 1,4'-bis-phosphate (lipid IVA). This chain is Tetraacyldisaccharide 4'-kinase, found in Rickettsia typhi (strain ATCC VR-144 / Wilmington).